Consider the following 101-residue polypeptide: uncharacterized protein (101 aa).

Transmembrane regions (helical) follow at residues 10-32 (FLPNFLLLGAGTALVLCLVFFLY), 45-67 (LGIWGSAVGLLMDTISLWNLPLI), and 77-99 (IAFTIWMVCAYCMYLLIPLILSH).

The protein resides in the cell membrane. This is an uncharacterized protein from Bacillus subtilis (strain 168).